A 379-amino-acid chain; its full sequence is Queuine tRNA-ribosyltransferase (379 aa).

Asp-94 functions as the Proton acceptor in the catalytic mechanism. Substrate-binding positions include 94-98 (DSGGF), Asp-148, Gln-191, and Gly-218. The interval 249–255 (GVGSPDS) is RNA binding. Catalysis depends on Asp-268, which acts as the Nucleophile. Residues 273–277 (TRIAR) are RNA binding; important for wobble base 34 recognition. Cys-306, Cys-308, Cys-311, and His-337 together coordinate Zn(2+).

It belongs to the queuine tRNA-ribosyltransferase family. As to quaternary structure, homodimer. Within each dimer, one monomer is responsible for RNA recognition and catalysis, while the other monomer binds to the replacement base PreQ1. Zn(2+) is required as a cofactor.

The enzyme catalyses 7-aminomethyl-7-carbaguanine + guanosine(34) in tRNA = 7-aminomethyl-7-carbaguanosine(34) in tRNA + guanine. It functions in the pathway tRNA modification; tRNA-queuosine biosynthesis. Its function is as follows. Catalyzes the base-exchange of a guanine (G) residue with the queuine precursor 7-aminomethyl-7-deazaguanine (PreQ1) at position 34 (anticodon wobble position) in tRNAs with GU(N) anticodons (tRNA-Asp, -Asn, -His and -Tyr). Catalysis occurs through a double-displacement mechanism. The nucleophile active site attacks the C1' of nucleotide 34 to detach the guanine base from the RNA, forming a covalent enzyme-RNA intermediate. The proton acceptor active site deprotonates the incoming PreQ1, allowing a nucleophilic attack on the C1' of the ribose to form the product. After dissociation, two additional enzymatic reactions on the tRNA convert PreQ1 to queuine (Q), resulting in the hypermodified nucleoside queuosine (7-(((4,5-cis-dihydroxy-2-cyclopenten-1-yl)amino)methyl)-7-deazaguanosine). The chain is Queuine tRNA-ribosyltransferase from Bacillus anthracis (strain CDC 684 / NRRL 3495).